The primary structure comprises 504 residues: Maturase K (504 aa).

This sequence belongs to the intron maturase 2 family. MatK subfamily.

The protein localises to the plastid. It is found in the chloroplast. Its function is as follows. Usually encoded in the trnK tRNA gene intron. Probably assists in splicing its own and other chloroplast group II introns. The sequence is that of Maturase K from Lobularia maritima (Sweet alyssum).